The primary structure comprises 131 residues: Translation initiation factor 5A (131 aa).

Lysine 37 carries the hypusine modification.

It belongs to the eIF-5A family.

It is found in the cytoplasm. Its function is as follows. Functions by promoting the formation of the first peptide bond. This chain is Translation initiation factor 5A (eIF5A), found in Methanococcus maripaludis (strain C6 / ATCC BAA-1332).